A 341-amino-acid polypeptide reads, in one-letter code: Methionine import ATP-binding protein MetN 2 (341 aa).

Residues 2 to 241 (ILLENVKKIY…PQQDITKRFV (240 aa)) enclose the ABC transporter domain. An ATP-binding site is contributed by 38–45 (GYSGAGKS).

The protein belongs to the ABC transporter superfamily. Methionine importer (TC 3.A.1.24) family. The complex is composed of two ATP-binding proteins (MetN), two transmembrane proteins (MetI) and a solute-binding protein (MetQ).

It localises to the cell membrane. It catalyses the reaction L-methionine(out) + ATP + H2O = L-methionine(in) + ADP + phosphate + H(+). The enzyme catalyses D-methionine(out) + ATP + H2O = D-methionine(in) + ADP + phosphate + H(+). Functionally, part of the ABC transporter complex MetNIQ involved in methionine import. Responsible for energy coupling to the transport system. In Bacillus thuringiensis subsp. konkukian (strain 97-27), this protein is Methionine import ATP-binding protein MetN 2.